The sequence spans 1190 residues: Wings apart-like protein homolog (1190 aa).

Disordered stretches follow at residues 1–23 (MTSR…FDEV) and 46–82 (QKRP…DESL). Residues 1-659 (MTSRFGKTYS…ENQEFTDDIE (659 aa)) form a mediates interaction with the cohesin complex region. Positions 54-66 (DIQEIPKKPKVEE) are enriched in basic and acidic residues. An FGF motif 1 motif is present at residues 73-75 (FGF). Ser-77 is modified (phosphoserine). An N6-acetyllysine modification is found at Lys-168. Ser-221, Ser-223, and Ser-226 each carry phosphoserine. Positions 260-286 (LLEMKDDDFKNRLENLNEAIEEDIVQS) form a coiled coil. A phosphoserine mark is found at Ser-347 and Ser-380. The FGF motif 2 signature appears at 429–431 (FGF). Residue Ser-443 is modified to Phosphoserine. The FGF motif 3 motif lies at 453-455 (FGF). Ser-459 and Ser-461 each carry phosphoserine. Residues 459 to 469 (SESEDDEDDDC) are compositionally biased toward acidic residues. A disordered region spans residues 459 to 553 (SESEDDEDDD…SGPKRSPTKA (95 aa)). Over residues 494 to 509 (SNDNSQDSQSGTNNAE) the composition is skewed to polar residues. Residues 531–540 (QGDKSKENTR) show a composition bias toward basic and acidic residues. The WAPL domain occupies 626-1169 (RREDKELYTV…KKFLSFMNLT (544 aa)). The stretch at 749-782 (ELEQDASSAKLLNEKDMNKIKEKIRRLCETVHNK) forms a coiled coil. Ser-904 is modified (phosphoserine).

The protein belongs to the WAPL family. As to quaternary structure, interacts with the cohesin complex throughout the cell cycle; interacts with both chromatin-bound and soluble pools of the complex. Interacts with RAD21; the interaction is direct. Interacts with PDS5A; the interaction is direct, cohesin-dependent and competitive with CDCA5/SORORIN. Interacts (via FGF motifs) with PDS5B; the interaction is direct. Interacts with a SMC1 protein (SMC1A or SMC1B) and SMC3. In terms of assembly, (Microbial infection) Isoform 2 interacts with Epstein-Barr virus EBNA2. Post-translationally, deubiquitinated by USP37; leading to stabilization. Isoform 1 is highly expressed in uterine cervix tumor. Isoform 2 is widely expressed with a high level in skeletal muscle and heart.

The protein resides in the nucleus. It localises to the chromosome. Its subcellular location is the cytoplasm. Functionally, regulator of sister chromatid cohesion in mitosis which negatively regulates cohesin association with chromatin. Involved in both sister chromatid cohesion during interphase and sister-chromatid resolution during early stages of mitosis. Couples DNA replication to sister chromatid cohesion. Cohesion ensures that chromosome partitioning is accurate in both meiotic and mitotic cells and plays an important role in DNA repair. This chain is Wings apart-like protein homolog, found in Homo sapiens (Human).